Reading from the N-terminus, the 163-residue chain is Ribosome maturation factor RimP (163 aa).

Residues 66-85 (ALDRDDPVPGPPYELEVSSP) form a disordered region.

This sequence belongs to the RimP family.

The protein resides in the cytoplasm. Required for maturation of 30S ribosomal subunits. This is Ribosome maturation factor RimP from Kocuria rhizophila (strain ATCC 9341 / DSM 348 / NBRC 103217 / DC2201).